We begin with the raw amino-acid sequence, 393 residues long: Staphopain B (393 aa).

The N-terminal stretch at 1–36 (MNSSYKSRVFNIISIIMVSMLILSLGAFANNNKAKA) is a signal peptide. A propeptide spanning residues 37–219 (DSHSKQLEIN…KVEENEAIQE (183 aa)) is cleaved from the precursor. Residues Cys243, His340, and Asn360 contribute to the active site.

The protein belongs to the peptidase C47 family. In the cytoplasm, prematurely activated/folded SspB forms a stable non-covalent complex with SspC. Post-translationally, proteolytically cleaved by staphylococcal serine protease (SspA).

It is found in the secreted. Its activity is regulated as follows. Prematurely activated/folded staphopain B is inhibited by staphostatin B (SspC), which is probably required to protect staphylococcal cytoplasmic proteins from degradation by SspB. In terms of biological role, cysteine protease that plays an important role in the inhibition of host innate immune response. Degrades host elastin, fibrogen, fibronectin and kininogen. Blocks phagocytosis of opsonised S.aureus by neutrophils and monocytes by inducing their death in a proteolytic activity-dependent manner. Decreases surface expression of the 'don't eat me' signal CD31 on neutrophils. Cleaves host galectin-3/LGALS3, thereby inhibiting the neutrophil-activating ability of the lectin. This Staphylococcus aureus (strain Mu50 / ATCC 700699) protein is Staphopain B (sspB).